The primary structure comprises 645 residues: 1,4-alpha-glucan branching enzyme GlgB (645 aa).

The active-site Nucleophile is Asp309. Glu352 acts as the Proton donor in catalysis. The segment at Val619–Arg645 is disordered. Residues Arg636–Arg645 show a composition bias toward polar residues.

The protein belongs to the glycosyl hydrolase 13 family. GlgB subfamily. Monomer.

It carries out the reaction Transfers a segment of a (1-&gt;4)-alpha-D-glucan chain to a primary hydroxy group in a similar glucan chain.. Its pathway is glycan biosynthesis; glycogen biosynthesis. In terms of biological role, catalyzes the formation of the alpha-1,6-glucosidic linkages in glycogen by scission of a 1,4-alpha-linked oligosaccharide from growing alpha-1,4-glucan chains and the subsequent attachment of the oligosaccharide to the alpha-1,6 position. The sequence is that of 1,4-alpha-glucan branching enzyme GlgB from Bacillus cereus (strain B4264).